The following is a 525-amino-acid chain: Mitochondrial-processing peptidase subunit alpha (525 aa).

The N-terminal 33 residues, 1 to 33 (MAAVVLAATRLLRGSGSWGCSRLRFGPPAYRRF), are a transit peptide targeting the mitochondrion. The residue at position 64 (Lys-64) is an N6-succinyllysine. Lys-299 bears the N6-acetyllysine mark.

Belongs to the peptidase M16 family. As to quaternary structure, heterodimer of PMPCA (alpha) and PMPCB (beta) subunits, forming the mitochondrial processing protease (MPP) in which PMPCA is involved in substrate recognition and binding and PMPCB is the catalytic subunit. Ubiquitously expressed with highest expression in fetal tissues and adult brain, cerebellum and cerebellar vermis.

It localises to the mitochondrion matrix. The protein localises to the mitochondrion inner membrane. Its function is as follows. Substrate recognition and binding subunit of the essential mitochondrial processing protease (MPP), which cleaves the mitochondrial sequence off newly imported precursors proteins. In Homo sapiens (Human), this protein is Mitochondrial-processing peptidase subunit alpha (PMPCA).